The chain runs to 928 residues: MAFSRREFLKSAAAASAASAVGMSVPSQLLAQAQEGEKGWRWDKSVCRFCGTGCGIMVATKNDQIVAVKGDPAAPVNRGLNCIKGYFNAKIMYGADRLTDPLLRVNEKGEFDKQGKFKPVSWKKAFDVMEAQFKRAYNELGPTGIGVFGSGQYTIQEGYMAAKLIKGGFRSNNLDPNARHCMASAVAAFMETFGIDEPAGCYDDIELTDTIITWGANMAEMHPILWARVTDKKLSNPDKVKVINLSTYTNRTSDLADIEIIFTPQTDLAIWNYIAREIVYNHPESIDMEFVKNHCIFTTGFTDIGYGMRTDIKHAKYDPKELDIAAKERSKVLSEAEGVTLRYLGMKAGDVMEMKHNATAGNHWEITFEDFKKALEPYTLDFVAKLAKGNSEESLESFKEKLQKLANLYIEKERKVVSFWTMGMNQHTRGTWVNEQSYMVHFLLGKQAKPGSGAFSLTGQPSACGTAREVGTFSHRLPADMVVANPKHRAVSEKIWKLPEGTLNPKMGAHYMNIMRDLEDGKIKFAWIQVNNPWQNTANANHWIKAAREMDNFIVCSDAYPGISAKVADLILPTAMIYEKWGAYGNAERRTQHWRQQVVPVGNAMPDVWQMAEFSKRFKLKEVWGAKKIDDKLTLPDVLEKAKAMGYSPEDTLFEVLFANSEAKSFKAKDPIGEGFENTEVFGDRRNVAGSDGEVFKGYGFFIHKYLWEEYRRFGNGHGHDLADFDTYHKVRGLKWPVVDGKETQWRFNAKYDPYARKAGSGEFAFYGDAMKELPRGDLLSPKTEEKFKLTNKAKIFFRPYMDPPEMPSSEYPLWLCTGRVLEHWHSGTMTMRVPELYRAVPEALCYMHPEDAKKLGVKQNEAVWVESRRGKVKARVDTRGRNRTPLGLVYVPWFDEKVYINKVCLDATCPISKQTDFKKCAVKVYKA.

Residues 1–33 (MAFSRREFLKSAAAASAASAVGMSVPSQLLAQA) constitute a signal peptide (tat-type signal). The region spanning 40 to 96 (WRWDKSVCRFCGTGCGIMVATKNDQIVAVKGDPAAPVNRGLNCIKGYFNAKIMYGAD) is the 4Fe-4S Mo/W bis-MGD-type domain. Cys47, Cys50, Cys54, and Cys82 together coordinate [4Fe-4S] cluster. Mo-bis(molybdopterin guanine dinucleotide)-binding positions include Lys84, Gln152, Asn177, Cys181, 214 to 221 (WGANMAEM), 265 to 267 (QTD), Met422, Gln426, Asn532, 557 to 558 (SD), Lys580, Asp607, and 818 to 827 (TGRVLEHWHS). A substrate-binding site is contributed by Trp894. Residues Asn902 and Lys919 each contribute to the Mo-bis(molybdopterin guanine dinucleotide) site.

It belongs to the prokaryotic molybdopterin-containing oxidoreductase family. NasA/NapA/NarB subfamily. In terms of assembly, component of the periplasmic nitrate reductase NapAB complex composed of NapA and NapB. It depends on [4Fe-4S] cluster as a cofactor. Requires Mo-bis(molybdopterin guanine dinucleotide) as cofactor. Predicted to be exported by the Tat system. The position of the signal peptide cleavage has not been experimentally proven.

Its subcellular location is the periplasm. The enzyme catalyses 2 Fe(II)-[cytochrome] + nitrate + 2 H(+) = 2 Fe(III)-[cytochrome] + nitrite + H2O. Catalytic subunit of the periplasmic nitrate reductase complex NapAB. Receives electrons from NapB and catalyzes the reduction of nitrate to nitrite. The protein is Periplasmic nitrate reductase of Wolinella succinogenes (strain ATCC 29543 / DSM 1740 / CCUG 13145 / JCM 31913 / LMG 7466 / NCTC 11488 / FDC 602W) (Vibrio succinogenes).